A 435-amino-acid polypeptide reads, in one-letter code: Glutamate-1-semialdehyde 2,1-aminomutase (435 aa).

The residue at position 269 (Lys-269) is an N6-(pyridoxal phosphate)lysine.

It belongs to the class-III pyridoxal-phosphate-dependent aminotransferase family. HemL subfamily. As to quaternary structure, homodimer. The cofactor is pyridoxal 5'-phosphate.

It localises to the cytoplasm. The catalysed reaction is (S)-4-amino-5-oxopentanoate = 5-aminolevulinate. Its pathway is porphyrin-containing compound metabolism; protoporphyrin-IX biosynthesis; 5-aminolevulinate from L-glutamyl-tRNA(Glu): step 2/2. This is Glutamate-1-semialdehyde 2,1-aminomutase from Gemmatimonas aurantiaca (strain DSM 14586 / JCM 11422 / NBRC 100505 / T-27).